The following is a 1381-amino-acid chain: MEVLMAERPTQVFHNKVIDGTAMKRLISRFIDHYGIGYTSHILDQVKTLGFRQATAASISLGIDDLLTIPSKRWLVQDAEQQSFILEKHHHYGNVHAVEKLRQSIEIWYATSEYLRQEMTPNFRMTDPFNPVHIMSFSGARGNASQVHQLVGMRGLMSDPQGQMIDLPIQSNLREGLSLTEYIISCYGARKGVVDTAIRTSDAGYLTRRLVEVVQHIVVRRTDCGTVRGISVSPRNGMMADRIFIQTLIGRVLADDIYIGSRCIATRNQDIGVGLVNRFITFRAQPISIRTPFTCRSTSWICQLCYGRSPAHDDLVELGEAVGIIAGQSIGEPGTQLTLRTFHTGGVFTGGTAEHVRAPSNGKIKFNEDLVHPTRTRHGHPAFLCSRDLYVTIESEDIIHNVCIPPKSFLLVQNDQYVESEQVIAEIRARTSTLNLKEKVRKHIYSDSEGEMHWNTDVYHAPEFTYGNIHLLPKTSHLWILLGEPWRSSLGPCSIHKDQDQMNAYSLSVKRRYISNPSVTNNQVRHKFFSSYFSGKNQKGDRIPDYSELNRMTCTGRCNLRYPGILDGNSDLLAKRRRNRVIIPLDSIQEGENQLIPSSGISIEIPRNGILRRNSILAYFDDPRYIRKSSGLTKYETRELNSIVNEEDLIEYRGVKVFWPKYQKEVNPFFFIPVEIHILAESSSIMVRHNSIIGVDTQITLNRRSRVGGLVRVKKKAEKIKLIIFSGDIHFPEKTNKAFRLIPPGGGKKNSKEYKKLKNWLYIQRMKLSRYEKKYFVLVQPVVPYKKTDGINLGRLFPADLLQESDNLQLRVVNYILYYDPILEIWDTSIQLVRTCLVLNWDQDKKIEKACASFVEIRTNGLIRDFLRIDLAKSPISYTGKRNDLPGSGLIYENGSDRANVNPFSSIYSSSKARIQESLNPNQGTIHTLLNRNKESQSLIILSSSNCSRIGPFNDVKSPNVIKESIKKDPLIPIRNSLGPLGTGFPISNFDLFSHLITHNKILVTNYLQLDNLKHIFQILKYYLLDENGKIYNPYSCSNIILNPFNLNWYFLHYNYCEETSTIVSLGQFLCENVCIAKKGPHLKSGQVLILQVDSVVIRSAKPYLATPGATVHGHYGEILYEGDTLVTFIYEKSRSGDITQGLPKVEQVLEVRSIDSISMNLEKRIEGWNKCITRILGIPWAFFIGAELTIVQSRISLVNKVQKVYRSQGVQIHNRHIEIIVRQITSKVLVSEDEMSNVFSPGELIGLLRAERMGRALEEAICYQAVLLGITRASMNTQSFISEASFQETARVLAKAALLGRIDWLKGLKENVVLGGMIPVGSGFKTPSSEPNNIPNNIAFELKKENLLEGEMKDILFYHRKFFDSCLSKNFHDTQEQSFF.

The Zn(2+) site is built by cysteine 224, cysteine 295, cysteine 302, and cysteine 305.

Belongs to the RNA polymerase beta' chain family. RpoC2 subfamily. In terms of assembly, in plastids the minimal PEP RNA polymerase catalytic core is composed of four subunits: alpha, beta, beta', and beta''. When a (nuclear-encoded) sigma factor is associated with the core the holoenzyme is formed, which can initiate transcription. Zn(2+) serves as cofactor.

The protein resides in the plastid. It localises to the chloroplast. It catalyses the reaction RNA(n) + a ribonucleoside 5'-triphosphate = RNA(n+1) + diphosphate. Its function is as follows. DNA-dependent RNA polymerase catalyzes the transcription of DNA into RNA using the four ribonucleoside triphosphates as substrates. In Guizotia abyssinica (Niger), this protein is DNA-directed RNA polymerase subunit beta''.